The following is a 452-amino-acid chain: MKDLNHIKHFYFIGVGGIGMSALARYFKAKGNFVAGYDRTSTELTRMLEDENIEVNYEDDITIIPETILNNQENTLIVYTPAVPKDHKQFEFLKKKNFEVVKRAELLGMVTDQKYCLAVAGTHGKTTTTAILGHLLKETGAKVTAFLGGISEDIQSNLIMQGDKVVVVEADEFDRSFLKLSPNLAAITSMDADHLDIYGDKSELEKSFREFAAKVPEDGKLFVKNGLPVNGSSVGINDNSDFSAQNIRIEEGSYVFDLKTPSETIKNLKFNLPGNHNLLNAITALAMAIEYGTSIHDLTRALYSFKGVKRRFSYKIKKDHLVLIDDYAHHPTEISAVHQAVREMYPNKKVLAVFQPHLFSRTRDFAEDFASSLSDFDKVFLLDIYPARELPIEGISSAWLLDKISNTNKALIQKKNLSEMIKTEEAEVVVMMGAGDIGEEVEKVKKALLHEA.

121-127 (GTHGKTT) contributes to the ATP binding site.

Belongs to the MurCDEF family.

The protein resides in the cytoplasm. It carries out the reaction UDP-N-acetyl-alpha-D-muramate + L-alanine + ATP = UDP-N-acetyl-alpha-D-muramoyl-L-alanine + ADP + phosphate + H(+). The protein operates within cell wall biogenesis; peptidoglycan biosynthesis. In terms of biological role, cell wall formation. The sequence is that of UDP-N-acetylmuramate--L-alanine ligase from Christiangramia forsetii (strain DSM 17595 / CGMCC 1.15422 / KT0803) (Gramella forsetii).